Consider the following 556-residue polypeptide: 2-succinyl-5-enolpyruvyl-6-hydroxy-3-cyclohexene-1-carboxylate synthase (556 aa).

It belongs to the TPP enzyme family. MenD subfamily. In terms of assembly, homodimer. The cofactor is Mg(2+). Requires Mn(2+) as cofactor. It depends on thiamine diphosphate as a cofactor.

The enzyme catalyses isochorismate + 2-oxoglutarate + H(+) = 5-enolpyruvoyl-6-hydroxy-2-succinyl-cyclohex-3-ene-1-carboxylate + CO2. The protein operates within quinol/quinone metabolism; 1,4-dihydroxy-2-naphthoate biosynthesis; 1,4-dihydroxy-2-naphthoate from chorismate: step 2/7. It participates in quinol/quinone metabolism; menaquinone biosynthesis. Catalyzes the thiamine diphosphate-dependent decarboxylation of 2-oxoglutarate and the subsequent addition of the resulting succinic semialdehyde-thiamine pyrophosphate anion to isochorismate to yield 2-succinyl-5-enolpyruvyl-6-hydroxy-3-cyclohexene-1-carboxylate (SEPHCHC). This is 2-succinyl-5-enolpyruvyl-6-hydroxy-3-cyclohexene-1-carboxylate synthase from Escherichia coli O17:K52:H18 (strain UMN026 / ExPEC).